A 284-amino-acid chain; its full sequence is Tropomyosin alpha-1 chain (284 aa).

Residues Met1–Glu40 form a disordered region. Residues Met1–Ile284 are a coiled coil. A compositionally biased stretch (basic and acidic residues) spans Lys12–Glu40.

Belongs to the tropomyosin family. As to quaternary structure, homodimer. Heterodimer of an alpha (TPM1, TPM3 or TPM4) and a beta (TPM2) chain.

The protein localises to the cytoplasm. It localises to the cytoskeleton. Its function is as follows. Binds to actin filaments in muscle and non-muscle cells. Plays a central role, in association with the troponin complex, in the calcium dependent regulation of vertebrate striated muscle contraction. Smooth muscle contraction is regulated by interaction with caldesmon. In non-muscle cells is implicated in stabilizing cytoskeleton actin filaments. This chain is Tropomyosin alpha-1 chain (tpm1), found in Rana temporaria (European common frog).